Reading from the N-terminus, the 205-residue chain is Imidazole glycerol phosphate synthase subunit HisH (205 aa).

Residues 6–205 form the Glutamine amidotransferase type-1 domain; the sequence is RVGIIDHGSG…LLTRWLNQLS (200 aa). The active-site Nucleophile is Cys-84. Catalysis depends on residues His-185 and Glu-187.

Heterodimer of HisH and HisF.

Its subcellular location is the cytoplasm. The catalysed reaction is 5-[(5-phospho-1-deoxy-D-ribulos-1-ylimino)methylamino]-1-(5-phospho-beta-D-ribosyl)imidazole-4-carboxamide + L-glutamine = D-erythro-1-(imidazol-4-yl)glycerol 3-phosphate + 5-amino-1-(5-phospho-beta-D-ribosyl)imidazole-4-carboxamide + L-glutamate + H(+). It catalyses the reaction L-glutamine + H2O = L-glutamate + NH4(+). It functions in the pathway amino-acid biosynthesis; L-histidine biosynthesis; L-histidine from 5-phospho-alpha-D-ribose 1-diphosphate: step 5/9. Functionally, IGPS catalyzes the conversion of PRFAR and glutamine to IGP, AICAR and glutamate. The HisH subunit catalyzes the hydrolysis of glutamine to glutamate and ammonia as part of the synthesis of IGP and AICAR. The resulting ammonia molecule is channeled to the active site of HisF. This is Imidazole glycerol phosphate synthase subunit HisH from Cutibacterium acnes (strain DSM 16379 / KPA171202) (Propionibacterium acnes).